The following is a 398-amino-acid chain: GTP cyclohydrolase-2 (398 aa).

Positions 1 to 172 are unknown; that stretch reads MNTPTHTHPH…TAAAGASTTE (172 aa). Residues 173–398 form a GTP cyclohydrolase II region; sequence YELVTRTPVP…VKSIPKTGHA (226 aa). 220-224 provides a ligand contact to GTP; that stretch reads RVHSS. C225, C236, and C238 together coordinate Zn(2+). Residues Q241, 263–265, and T285 each bind GTP; that span reads EGR. D297 (proton acceptor) is an active-site residue. The Nucleophile role is filled by R299. The GTP site is built by S320 and K325. Positions 375 to 398 are disordered; the sequence is QRPQDPSETVDGETVKSIPKTGHA.

It in the C-terminal section; belongs to the GTP cyclohydrolase II family. It depends on Zn(2+) as a cofactor.

The enzyme catalyses GTP + 4 H2O = 2,5-diamino-6-hydroxy-4-(5-phosphoribosylamino)-pyrimidine + formate + 2 phosphate + 3 H(+). The protein operates within cofactor biosynthesis; riboflavin biosynthesis; 5-amino-6-(D-ribitylamino)uracil from GTP: step 1/4. Functionally, catalyzes the conversion of GTP to 2,5-diamino-6-ribosylamino-4(3H)-pyrimidinone 5'-phosphate (DARP), formate and pyrophosphate. This chain is GTP cyclohydrolase-2 (ribA), found in Xylella fastidiosa (strain 9a5c).